A 226-amino-acid chain; its full sequence is Ribonuclease 3 (226 aa).

Residues 6 to 128 (VNQLQKKLGY…LIGAIFLDSD (123 aa)) enclose the RNase III domain. Glu-41 contacts Mg(2+). Asp-45 is a catalytic residue. Positions 114 and 117 each coordinate Mg(2+). Residue Glu-117 is part of the active site. Residues 155–225 (DPKTRLQEYL…AEQALIQLEL (71 aa)) form the DRBM domain.

It belongs to the ribonuclease III family. As to quaternary structure, homodimer. Mg(2+) is required as a cofactor.

The protein localises to the cytoplasm. It catalyses the reaction Endonucleolytic cleavage to 5'-phosphomonoester.. Its function is as follows. Digests double-stranded RNA. Involved in the processing of primary rRNA transcript to yield the immediate precursors to the large and small rRNAs (23S and 16S). Processes some mRNAs, and tRNAs when they are encoded in the rRNA operon. Processes pre-crRNA and tracrRNA of type II CRISPR loci if present in the organism. This Proteus mirabilis (strain HI4320) protein is Ribonuclease 3.